We begin with the raw amino-acid sequence, 233 residues long: Small heat shock protein hspF (233 aa).

The region spanning 129 to 233 (IPLFTFFEPL…ILLITVNKFL (105 aa)) is the sHSP domain.

The protein belongs to the small heat shock protein (HSP20) family.

The polypeptide is Small heat shock protein hspF (hspF-1) (Dictyostelium discoideum (Social amoeba)).